The following is a 112-amino-acid chain: uncharacterized protein (112 aa).

This is an uncharacterized protein from Escherichia coli.